The sequence spans 327 residues: 1-aminocyclopropane-1-carboxylate oxidase 1 (327 aa).

One can recognise a Fe2OG dioxygenase domain in the interval 157–257 (PTFGTKVSNY…RMSIASFYNP (101 aa)). 3 residues coordinate Fe cation: His-181, Asp-183, and His-238.

It belongs to the iron/ascorbate-dependent oxidoreductase family. Fe cation is required as a cofactor.

The enzyme catalyses 1-aminocyclopropane-1-carboxylate + L-ascorbate + O2 = ethene + L-dehydroascorbate + hydrogen cyanide + CO2 + 2 H2O. It participates in alkene biosynthesis; ethylene biosynthesis via S-adenosyl-L-methionine; ethylene from S-adenosyl-L-methionine: step 2/2. The sequence is that of 1-aminocyclopropane-1-carboxylate oxidase 1 (ACO1) from Doritaenopsis sp. (Moth orchid).